Here is a 400-residue protein sequence, read N- to C-terminus: Multidrug resistance protein MdtH (400 aa).

The next 10 membrane-spanning stretches (helical) occupy residues 13–33 (YFLLLDNMLVVLGFFVVFPLI), 34–54 (SIRFVEQLGWAGVIVGFALGL), 99–116 (PWILWLSCILSALGGTLF), 139–159 (LLLMQDSAGAVIGALIGSWLL), 165–185 (LVCWVGAGIFVLAAIFNAWLL), 214–234 (VLTLTGYFVLSVQVMLMFPIV), 244–264 (AVKWMYAIEALLSLTLLYPIA), 289–309 (FPVGITHSLHAIFLIITLFYL), 340–360 (LGLAFGGAIGYTGGGWMYDIG), and 365–385 (LPELPWFLLGSIGFITLYALH).

It belongs to the major facilitator superfamily. DHA1 family. MdtH (TC 2.A.1.2.21) subfamily.

It is found in the cell inner membrane. This is Multidrug resistance protein MdtH from Proteus mirabilis (strain HI4320).